The chain runs to 378 residues: UPF0725 protein At1g23970 (378 aa).

The protein belongs to the UPF0725 (EMB2204) family.

The chain is UPF0725 protein At1g23970 from Arabidopsis thaliana (Mouse-ear cress).